The sequence spans 282 residues: Parvulin-like PPIase (282 aa).

The first 20 residues, 1 to 20 (MKKLSVIFLSVSMLSGIAFA), serve as a signal peptide directing secretion. The region spanning 138-231 (KEQIKVAHIL…FGWHIIKVLE (94 aa)) is the PpiC domain.

This sequence belongs to the PpiC/parvulin rotamase family.

The protein resides in the cell outer membrane. It carries out the reaction [protein]-peptidylproline (omega=180) = [protein]-peptidylproline (omega=0). This chain is Parvulin-like PPIase (plp), found in Rickettsia conorii (strain ATCC VR-613 / Malish 7).